The following is an 89-amino-acid chain: MDENDGENLLTQPDDTGNSTNGVYAAGAPTKESVEERLVSLLDSYKTITDCCRETGNRLDRLERHLESLRKALLDLNRKIDVQTGYSRY.

The tract at residues 1–29 is disordered; that stretch reads MDENDGENLLTQPDDTGNSTNGVYAAGAP. Residues 9 to 22 are compositionally biased toward polar residues; that stretch reads LLTQPDDTGNSTNG. Asn18 carries N-linked (GlcNAc...) asparagine; by host glycosylation.

This sequence belongs to the poxviruses fusion protein family. In terms of assembly, homotrimer, covalently linked.

The protein localises to the virion membrane. This Capra hircus (Goat) protein is 10 kDa fusion protein.